The chain runs to 331 residues: GTP 3',8-cyclase 2 (331 aa).

The Radical SAM core domain occupies 9–234; the sequence is PFGRRITYLR…PSLARSGGPS (226 aa). R18 provides a ligand contact to GTP. The [4Fe-4S] cluster site is built by C25 and C29. Y31 contributes to the S-adenosyl-L-methionine binding site. C32 contributes to the [4Fe-4S] cluster binding site. GTP is bound at residue R67. S-adenosyl-L-methionine is bound at residue G71. T98 lines the GTP pocket. S122 is an S-adenosyl-L-methionine binding site. K159 serves as a coordination point for GTP. M193 serves as a coordination point for S-adenosyl-L-methionine. Residues C257 and C260 each coordinate [4Fe-4S] cluster. GTP is bound at residue 262–264; sequence RVR. Position 274 (C274) interacts with [4Fe-4S] cluster.

It belongs to the radical SAM superfamily. MoaA family. In terms of assembly, monomer and homodimer. [4Fe-4S] cluster serves as cofactor.

The enzyme catalyses GTP + AH2 + S-adenosyl-L-methionine = (8S)-3',8-cyclo-7,8-dihydroguanosine 5'-triphosphate + 5'-deoxyadenosine + L-methionine + A + H(+). The protein operates within cofactor biosynthesis; molybdopterin biosynthesis. Catalyzes the cyclization of GTP to (8S)-3',8-cyclo-7,8-dihydroguanosine 5'-triphosphate. The protein is GTP 3',8-cyclase 2 (moaA2) of Pseudomonas aeruginosa (strain ATCC 15692 / DSM 22644 / CIP 104116 / JCM 14847 / LMG 12228 / 1C / PRS 101 / PAO1).